The chain runs to 361 residues: S-adenosylmethionine decarboxylase proenzyme (361 aa).

Catalysis depends on residues glutamate 13 and glutamate 16. Catalysis depends on serine 73, which acts as the Schiff-base intermediate with substrate; via pyruvic acid. A Pyruvic acid (Ser); by autocatalysis modification is found at serine 73. Cysteine 87 (proton donor; for catalytic activity) is an active-site residue. Residues serine 236 and histidine 249 each act as proton acceptor; for processing activity in the active site.

The protein belongs to the eukaryotic AdoMetDC family. Pyruvate is required as a cofactor. In terms of processing, is synthesized initially as an inactive proenzyme. Formation of the active enzyme involves a self-maturation process in which the active site pyruvoyl group is generated from an internal serine residue via an autocatalytic post-translational modification. Two non-identical subunits are generated from the proenzyme in this reaction, and the pyruvate is formed at the N-terminus of the alpha chain, which is derived from the carboxyl end of the proenzyme. The post-translation cleavage follows an unusual pathway, termed non-hydrolytic serinolysis, in which the side chain hydroxyl group of the serine supplies its oxygen atom to form the C-terminus of the beta chain, while the remainder of the serine residue undergoes an oxidative deamination to produce ammonia and the pyruvoyl group blocking the N-terminus of the alpha chain.

The catalysed reaction is S-adenosyl-L-methionine + H(+) = S-adenosyl 3-(methylsulfanyl)propylamine + CO2. Its pathway is amine and polyamine biosynthesis; S-adenosylmethioninamine biosynthesis; S-adenosylmethioninamine from S-adenosyl-L-methionine: step 1/1. The protein is S-adenosylmethionine decarboxylase proenzyme (SAMDC1) of Nicotiana sylvestris (Wood tobacco).